A 92-amino-acid chain; its full sequence is cAMP-dependent protein kinase inhibitor beta (92 aa).

Residues 1 to 26 are disordered; that stretch reads MGGGTSPEAQQDSVMRTDSSEMTDVE. The span at 7–26 shows a compositional bias: polar residues; the sequence is PEAQQDSVMRTDSSEMTDVE. Position 56 is a phosphoserine (Ser56). Residues 70–82 show a composition bias toward basic and acidic residues; it reads EDAKTKNEEKDQG. A disordered region spans residues 70 to 92; sequence EDAKTKNEEKDQGQPKTPLNEGK.

This sequence belongs to the PKI family.

Its function is as follows. Extremely potent competitive inhibitor of cAMP-dependent protein kinase activity, this protein interacts with the catalytic subunit of the enzyme after the cAMP-induced dissociation of its regulatory chains. This Mus musculus (Mouse) protein is cAMP-dependent protein kinase inhibitor beta (Pkib).